A 227-amino-acid chain; its full sequence is ATP-dependent Clp protease proteolytic subunit (227 aa).

S120 (nucleophile) is an active-site residue. H145 is a catalytic residue.

The protein belongs to the peptidase S14 family. In terms of assembly, fourteen ClpP subunits assemble into 2 heptameric rings which stack back to back to give a disk-like structure with a central cavity, resembling the structure of eukaryotic proteasomes.

Its subcellular location is the cytoplasm. The enzyme catalyses Hydrolysis of proteins to small peptides in the presence of ATP and magnesium. alpha-casein is the usual test substrate. In the absence of ATP, only oligopeptides shorter than five residues are hydrolyzed (such as succinyl-Leu-Tyr-|-NHMec, and Leu-Tyr-Leu-|-Tyr-Trp, in which cleavage of the -Tyr-|-Leu- and -Tyr-|-Trp bonds also occurs).. Cleaves peptides in various proteins in a process that requires ATP hydrolysis. Has a chymotrypsin-like activity. Plays a major role in the degradation of misfolded proteins. The polypeptide is ATP-dependent Clp protease proteolytic subunit (Rickettsia bellii (strain RML369-C)).